The sequence spans 548 residues: Fumarate hydratase class I, aerobic (548 aa).

[4Fe-4S] cluster contacts are provided by cysteine 105, cysteine 224, and cysteine 318.

It belongs to the class-I fumarase family. In terms of assembly, homodimer. [4Fe-4S] cluster is required as a cofactor.

It catalyses the reaction (S)-malate = fumarate + H2O. The enzyme catalyses oxaloacetate = enol-oxaloacetate. Its pathway is carbohydrate metabolism; tricarboxylic acid cycle; (S)-malate from fumarate: step 1/1. Catalyzes the reversible hydration of fumarate to (S)-malate. Functions as an aerobic enzyme in the direction of malate formation as part of the citric acid cycle. Accounts for about 80% of the fumarase activity when the bacteria grow aerobically. To a lesser extent, also displays D-tartrate dehydratase activity in vitro, but is not able to convert (R)-malate, L-tartrate or meso-tartrate. Can also catalyze the isomerization of enol- to keto-oxaloacetate. The sequence is that of Fumarate hydratase class I, aerobic from Escherichia coli O6:H1 (strain CFT073 / ATCC 700928 / UPEC).